Consider the following 346-residue polypeptide: D-alanine--D-alanine ligase (346 aa).

An ATP-grasp domain is found at 133-327 (KLYAKSVGVK…TLADQIPLEK (195 aa)). 159 to 211 (LRFPCIIKPARLGSSIGISIVKDEKDLEYAKDVGFEFDNDLVVEEFKNNIKEY) contacts ATP. Residues Asp284, Glu296, and Asn298 each coordinate Mg(2+).

Belongs to the D-alanine--D-alanine ligase family. It depends on Mg(2+) as a cofactor. Requires Mn(2+) as cofactor.

Its subcellular location is the cytoplasm. The catalysed reaction is 2 D-alanine + ATP = D-alanyl-D-alanine + ADP + phosphate + H(+). Its pathway is cell wall biogenesis; peptidoglycan biosynthesis. Functionally, cell wall formation. The polypeptide is D-alanine--D-alanine ligase (Campylobacter jejuni subsp. doylei (strain ATCC BAA-1458 / RM4099 / 269.97)).